A 265-amino-acid chain; its full sequence is Thiazole synthase (265 aa).

Residue Lys-106 is the Schiff-base intermediate with DXP of the active site. Residues Gly-167, 193 to 194 (AG), and 215 to 216 (NS) each bind 1-deoxy-D-xylulose 5-phosphate.

Belongs to the ThiG family. Homotetramer. Forms heterodimers with either ThiH or ThiS.

The protein localises to the cytoplasm. The catalysed reaction is [ThiS sulfur-carrier protein]-C-terminal-Gly-aminoethanethioate + 2-iminoacetate + 1-deoxy-D-xylulose 5-phosphate = [ThiS sulfur-carrier protein]-C-terminal Gly-Gly + 2-[(2R,5Z)-2-carboxy-4-methylthiazol-5(2H)-ylidene]ethyl phosphate + 2 H2O + H(+). The protein operates within cofactor biosynthesis; thiamine diphosphate biosynthesis. Its function is as follows. Catalyzes the rearrangement of 1-deoxy-D-xylulose 5-phosphate (DXP) to produce the thiazole phosphate moiety of thiamine. Sulfur is provided by the thiocarboxylate moiety of the carrier protein ThiS. In vitro, sulfur can be provided by H(2)S. This chain is Thiazole synthase, found in Prochlorococcus marinus (strain MIT 9515).